A 172-amino-acid chain; its full sequence is Adenine phosphoribosyltransferase (172 aa).

It belongs to the purine/pyrimidine phosphoribosyltransferase family. In terms of assembly, homodimer.

The protein resides in the cytoplasm. It catalyses the reaction AMP + diphosphate = 5-phospho-alpha-D-ribose 1-diphosphate + adenine. Its pathway is purine metabolism; AMP biosynthesis via salvage pathway; AMP from adenine: step 1/1. In terms of biological role, catalyzes a salvage reaction resulting in the formation of AMP, that is energically less costly than de novo synthesis. The protein is Adenine phosphoribosyltransferase of Parasynechococcus marenigrum (strain WH8102).